We begin with the raw amino-acid sequence, 331 residues long: CRISPR-associated endonuclease Cas1 (331 aa).

The Mn(2+) site is built by E158, H223, and D238.

Belongs to the CRISPR-associated endonuclease Cas1 family. In terms of assembly, homodimer, forms a heterotetramer with a Cas2 homodimer. Requires Mg(2+) as cofactor. Mn(2+) serves as cofactor.

CRISPR (clustered regularly interspaced short palindromic repeat), is an adaptive immune system that provides protection against mobile genetic elements (viruses, transposable elements and conjugative plasmids). CRISPR clusters contain spacers, sequences complementary to antecedent mobile elements, and target invading nucleic acids. CRISPR clusters are transcribed and processed into CRISPR RNA (crRNA). Acts as a dsDNA endonuclease. Involved in the integration of spacer DNA into the CRISPR cassette. Plasmid targeted by CRISPR locus P1 transform wild-type cells very poorly. The chain is CRISPR-associated endonuclease Cas1 from Haloferax volcanii (strain ATCC 29605 / DSM 3757 / JCM 8879 / NBRC 14742 / NCIMB 2012 / VKM B-1768 / DS2) (Halobacterium volcanii).